Reading from the N-terminus, the 765-residue chain is 5-methyltetrahydropteroyltriglutamate--homocysteine methyltransferase 2 (765 aa).

Residues Lys-18 and Asn-116 each coordinate 5-methyltetrahydropteroyltri-L-glutamate. Residues 437–439 (IGS) and Glu-490 each bind L-homocysteine. Residues 437-439 (IGS) and Glu-490 contribute to the L-methionine site. 5-methyltetrahydropteroyltri-L-glutamate-binding positions include Asp-495, Tyr-518, 521–522 (RC), and Trp-567. Asp-605 contacts L-homocysteine. L-methionine is bound at residue Asp-605. Residues His-647, Cys-649, His-658, Asp-662, and Glu-671 each coordinate Zn(2+). Residue His-701 is the Proton donor of the active site. Cys-733 is a Zn(2+) binding site.

It belongs to the vitamin-B12 independent methionine synthase family. The cofactor is Zn(2+). In terms of tissue distribution, expressed in leaves, stems and siliques.

It localises to the cytoplasm. The protein resides in the cytosol. The catalysed reaction is 5-methyltetrahydropteroyltri-L-glutamate + L-homocysteine = tetrahydropteroyltri-L-glutamate + L-methionine. It participates in amino-acid biosynthesis; L-methionine biosynthesis via de novo pathway; L-methionine from L-homocysteine (MetE route): step 1/1. Catalyzes the transfer of a methyl group from 5-methyltetrahydrofolate to homocysteine resulting in methionine formation. This is 5-methyltetrahydropteroyltriglutamate--homocysteine methyltransferase 2 (MS2) from Arabidopsis thaliana (Mouse-ear cress).